Consider the following 460-residue polypeptide: UDP-N-acetylmuramoylalanine--D-glutamate ligase (460 aa).

ATP is bound at residue 115-121 (GTNGKTT).

It belongs to the MurCDEF family.

It is found in the cytoplasm. The catalysed reaction is UDP-N-acetyl-alpha-D-muramoyl-L-alanine + D-glutamate + ATP = UDP-N-acetyl-alpha-D-muramoyl-L-alanyl-D-glutamate + ADP + phosphate + H(+). Its pathway is cell wall biogenesis; peptidoglycan biosynthesis. In terms of biological role, cell wall formation. Catalyzes the addition of glutamate to the nucleotide precursor UDP-N-acetylmuramoyl-L-alanine (UMA). The protein is UDP-N-acetylmuramoylalanine--D-glutamate ligase of Salinibacter ruber (strain DSM 13855 / M31).